A 148-amino-acid polypeptide reads, in one-letter code: 3-dehydroquinate dehydratase (148 aa).

The active-site Proton acceptor is Tyr-24. Substrate is bound by residues Asn-80, His-86, and Asp-93. The active-site Proton donor is His-106. Substrate is bound by residues 107 to 108 (IS) and Arg-117.

Belongs to the type-II 3-dehydroquinase family. Homododecamer.

The catalysed reaction is 3-dehydroquinate = 3-dehydroshikimate + H2O. It participates in metabolic intermediate biosynthesis; chorismate biosynthesis; chorismate from D-erythrose 4-phosphate and phosphoenolpyruvate: step 3/7. Its function is as follows. Catalyzes a trans-dehydration via an enolate intermediate. In Acidovorax sp. (strain JS42), this protein is 3-dehydroquinate dehydratase.